The primary structure comprises 185 residues: Ribosome-recycling factor (185 aa).

This sequence belongs to the RRF family.

It localises to the cytoplasm. Its function is as follows. Responsible for the release of ribosomes from messenger RNA at the termination of protein biosynthesis. May increase the efficiency of translation by recycling ribosomes from one round of translation to another. This chain is Ribosome-recycling factor, found in Pseudarthrobacter chlorophenolicus (strain ATCC 700700 / DSM 12829 / CIP 107037 / JCM 12360 / KCTC 9906 / NCIMB 13794 / A6) (Arthrobacter chlorophenolicus).